The following is a 605-amino-acid chain: Replication and transcription activator (605 aa).

Disordered regions lie at residues 307-381 (SLPS…EPEQ) and 447-509 (RIRP…EDPD). Residues 321–338 (SADCGDSSSSSSDSGNSD) are compositionally biased toward low complexity. Over residues 341–353 (QSEREEARAEAPR) the composition is skewed to basic and acidic residues. Residues 355–364 (RAPKSRRTSR) show a composition bias toward basic residues.

It belongs to the herpesviridae Rta family. As to quaternary structure, interacts with human ATF7IP protein, leading to promote and regulate host genes in virus-infected cells. Interacts with RNA polymerase III complex; this interaction downregulates small RNA transcription and 5'-pppRNA production.

It is found in the host nucleus. Its subcellular location is the virion tegument. Functionally, immediate-early transcription factor that controls the initiation of viral lytic gene expression and lytic reactivation from latency. Triggers lytic replication, and initiates a cellular senescence program in epithelial cells. Up-regulates human DCR3/TNFRSF6B by directly binding to its receptor. Globally induces a proteasome-dependent loss of SUMOylated proteins in the host cell and the loss of promeylocytic leukemia nuclear bodies. Improves the stability of the triplex capsid protein TRX1 by reducing the ubiquitination level of the latter. Mediates evasion of inflammasome activation and antiviral responses (T- and NK cell activation) during EBV early lytic infection. This is Replication and transcription activator from Epstein-Barr virus (strain AG876) (HHV-4).